Here is a 310-residue protein sequence, read N- to C-terminus: Homeobox protein dsc-1 (310 aa).

A DNA-binding region (homeobox) is located at residues 180–239; sequence RRRFRTNFTELQSTFLEDSFKESHYPDHKAKKYMADFLKIPEDRITVWFQNRRAKWRRKE. A disordered region spans residues 262–310; that stretch reads CFSAQHPDDGPNAKHPNSFGIPNQPMSLDQFPMNTEQDFPEFPSLQEHQ. The span at 281–298 shows a compositional bias: polar residues; the sequence is GIPNQPMSLDQFPMNTEQ.

Expressed in the bilateral sensory neurons AWA, AWB, AWC, ASE, FLP and PVD. Also expressed in the enteric intestinal and anal depressor muscles.

The protein resides in the nucleus. Its subcellular location is the cell projection. The protein localises to the axon. It is found in the cytoplasm. Its function is as follows. Transcriptional regulator which plays a role in the expulsion step of defecation by controlling enteric muscle-specific expression of exp-1 which is required for enteric muscle contraction. Not required for exp-1 expression in the PDA neuron. Also involved in controlling the length of the defecation cycle. The polypeptide is Homeobox protein dsc-1 (Caenorhabditis elegans).